The chain runs to 258 residues: Coiled-coil domain-containing protein 127 (258 aa).

The stretch at 50–170 (KEIEKEKEAC…EEALAERQSI (121 aa)) forms a coiled coil.

The sequence is that of Coiled-coil domain-containing protein 127 (CCDC127) from Sus scrofa (Pig).